The primary structure comprises 2218 residues: RNA-directed RNA polymerase L (2218 aa).

An endonuclease region spans residues 26–288; that stretch reads KLAFLVQTEP…VAEDNIEHLI (263 aa). Glu51, Asp89, and Glu102 together coordinate Mn(2+). Lys115 is an active-site residue. In terms of domain architecture, RdRp catalytic spans 1174 to 1370; it reads LSMKLNVSLA…YMSDQLNKFV (197 aa). Asp1332 lines the Mg(2+) pocket.

Belongs to the Bunyavirales RNA polymerase family. As to quaternary structure, homomultimer; the oligomeric structure is essential for the polymerase activity. Interacts with nucleoprotein N. Interacts with protein Z; this interaction inhibits viral transcription and replication, Z partially blocks the product exit tunnel for the releasing nascent RNA product. It depends on Mn(2+) as a cofactor. Requires Mg(2+) as cofactor.

It is found in the virion. Its subcellular location is the host cytoplasm. It carries out the reaction RNA(n) + a ribonucleoside 5'-triphosphate = RNA(n+1) + diphosphate. RNA-dependent RNA polymerase, which is responsible for the replication and transcription of the viral RNA genome using antigenomic RNA as an intermediate. During transcription, synthesizes subgenomic RNAs and assures their capping by a cap-snatching mechanism, which involves the endonuclease activity cleaving the host capped pre-mRNAs. These short capped RNAs are then used as primers for viral transcription. The 3'-end of subgenomic mRNAs molecules are heterogeneous and not polyadenylated. The replicase function is to direct synthesis of antigenomic and genomic RNA which are encapsidated and non capped. As a consequence of the use of the same enzyme for both transcription and replication, these mechanisms need to be well coordinated. These processes may be regulated by proteins N and Z in a dose-dependent manner. Z protein inhibits the viral polymerase L und thus the viral transcription and RNA synthesis. The polypeptide is RNA-directed RNA polymerase L (Lassa virus (strain Mouse/Sierra Leone/Josiah/1976) (LASV)).